The sequence spans 247 residues: Transcription factor otaR1 (247 aa).

2 disordered regions span residues 1–48 (MEPA…ETSM) and 100–143 (DNAS…PLGN). The span at 23–47 (DESSSTGLSLGSLLSSSNDLSSETS) shows a compositional bias: low complexity. Polar residues predominate over residues 134 to 143 (ANPTSVPLGN). The interval 156-196 (KKYHEKYKERNRVAAGKSRQKQVDLIELLQAEQREEERRRK) is basic motif. The bZIP domain maps to 156–219 (KKYHEKYKER…LDLKQELQHH (64 aa)). The tract at residues 198 to 212 (LERELSQIHKELLDL) is leucine-zipper.

The protein localises to the nucleus. Its function is as follows. Transcription factor; part of the gene cluster that mediates the biosynthesis of ochratoxin A (OTA), a mycotoxin demonstrated to have nephrotoxic, immunotoxic, genotoxic, neurotoxic, and teratogenic properties. Positively regulates the expression of the cluster genes otaA, otaB, otaC and otaD, and the subsequent production of OTA. The polypeptide is Transcription factor otaR1 (Aspergillus carbonarius (strain ITEM 5010)).